A 690-amino-acid chain; its full sequence is Choline transporter-like 1 (690 aa).

A helical transmembrane segment spans residues 23-43 (IFWLVLYVVFWIALIVIAVFS). Asn-134 carries an N-linked (GlcNAc...) asparagine glycan. 4 consecutive transmembrane segments (helical) span residues 203–223 (LYKAWPTIVLICALSLVFSIV), 237–259 (WLICIIVVVASVGITGVLWWSYY), 282–302 (ATIYVLAIAATCIMIILLVVI), and 334–354 (LLAFLALSVFLAFWVVVVVCL). An N-linked (GlcNAc...) asparagine glycan is attached at Asn-391. A run of 4 helical transmembrane segments spans residues 415–435 (IYIIGLIWTSEFIFACQQLAI), 464–484 (LGSVAKGSLIITIFKIPRLIL), 565–585 (FVLFLGKLAVASICGLISILL), and 594–614 (FYMAPVIIITVFAFFIAHIIL).

This sequence belongs to the CTL (choline transporter-like) family.

The protein resides in the membrane. The sequence is that of Choline transporter-like 1 from Anopheles gambiae (African malaria mosquito).